Reading from the N-terminus, the 244-residue chain is SPX domain-containing protein 6 (244 aa).

An SPX domain is found at 1-147; it reads MKFGKLLKRQ…GGALAAPVAE (147 aa). The disordered stretch occupies residues 212–244; sequence GSSTHGRHSLPPLTLPDSDWLRSFQPPSPIPIQ.

In Oryza sativa subsp. indica (Rice), this protein is SPX domain-containing protein 6 (SPX6).